We begin with the raw amino-acid sequence, 602 residues long: Solute carrier organic anion transporter family member 1C1 (602 aa).

The Cytoplasmic segment spans residues 1 to 43; sequence MDTSSKENIQLFCKTSVQPVGRPSFKTEYPSSEEKQPCCGELK. Residues 44-63 form a helical membrane-spanning segment; it reads VFLGALSFVYFAKALAEGYL. Topologically, residues 64 to 82 are extracellular; that stretch reads KSTITQIERRFDIPSSLVG. The chain crosses the membrane as a helical span at residues 83-103; sequence VIDGSFEIGNLLVITFVSYFG. At 104 to 109 the chain is on the cytoplasmic side; it reads AKLHRP. Residues 110-134 form a helical membrane-spanning segment; sequence KIIGAGCLIMGVGTLLIAMPQFFME. At 135–139 the chain is on the extracellular side; that stretch reads QYKYE. A helical transmembrane segment spans residues 140–156; it reads IYSPSSNSTLSISPCLL. Residues 157–238 lie on the Cytoplasmic side of the membrane; that stretch reads ESSSQLPVSV…ARDFLPSLKY (82 aa). The tract at residues 190–216 is disordered; that stretch reads PRSQSREDSNSSSEKSKFIRDDHTDYQ. A compositionally biased stretch (basic and acidic residues) spans 193–214; sequence QSREDSNSSSEKSKFIRDDHTD. A helical membrane pass occupies residues 239-260; sequence LFGNPVYFLYLCTSTVQFNSLF. At 261–280 the chain is on the extracellular side; the sequence is GMVTYKPKYIEQQYGQSSSR. Residues 281-304 traverse the membrane as a helical segment; it reads ANFVIGLINIPAVALGIFSGGIAM. The Cytoplasmic portion of the chain corresponds to 305–308; it reads KKFR. Residues 309–332 traverse the membrane as a helical segment; the sequence is ISVCGAAKLYLGSSVFGYLLFLSL. Residues 333–444 are Extracellular-facing; it reads FALGCENSDV…NGCPQMFLYF (112 aa). Positions 360–415 constitute a Kazal-like domain; it reads RALFSDCNPRCKCSETKWEPMCGENGITYVSACPAGCQTSNRSGKNIIFYNCTCVG. Disulfide bonds link Cys366–Cys396, Cys372–Cys392, and Cys381–Cys413. N-linked (GlcNAc...) asparagine glycans are attached at residues Asn400, Asn410, and Asn423. The chain crosses the membrane as a helical span at residues 445–467; that stretch reads LVISVITSYTLSLGGIPGYILLL. At 468–476 the chain is on the cytoplasmic side; it reads RCIKPQLKS. The chain crosses the membrane as a helical span at residues 477-502; that stretch reads FALGIYTLSIRVLAGIPAPVYFGVLI. Residues 503–536 lie on the Extracellular side of the membrane; sequence DTSCLKWGFKRCGSRGSCRLYDSNVFRHIYLGLT. Residues 537–554 traverse the membrane as a helical segment; sequence VILGTVSIFLSIAVLFIL. The Cytoplasmic portion of the chain corresponds to 555–602; it reads KKNYVSKHRNFITKRERTMVSTRFQKENCTTSDHLLQPKYWPGKETQL.

Belongs to the organo anion transporter (TC 2.A.60) family.

Its subcellular location is the cell membrane. It carries out the reaction 3,3',5'-triiodo-L-thyronine(out) = 3,3',5'-triiodo-L-thyronine(in). The enzyme catalyses L-thyroxine(out) = L-thyroxine(in). The catalysed reaction is L-thyroxine sulfate(out) = L-thyroxine sulfate(in). In terms of biological role, mediates the Na(+)-independent high affinity transport of organic anions such as the thyroid hormones L-thyroxine (T4), L-thyroxine sulfate (T4S), and 3,3',5'-triiodo-L-thyronine (reverse T3, rT3) at the plasma membrane. Regulates T4 levels in different brain regions by transporting T4, and also by serving as an export pump for T4S, which is a source of T4 after hydrolysis by local sulfatases. Increases the access of these substrates to the intracellular sites where they are metabolized by the deiodinases. Other potential substrates, such as triiodothyronine (T3), 17-beta-glucuronosyl estradiol (17beta-estradiol 17-O-(beta-D-glucuronate)), estrone-3-sulfate (E1S) and sulfobromophthalein (BSP) are transported with much lower efficiency. Transports T4 and E1S in a pH-insensitive manner. Facilitates the transport of thyroid hormones across the blood-brain barrier and into glia and neuronal cells in the brain. In Macaca fascicularis (Crab-eating macaque), this protein is Solute carrier organic anion transporter family member 1C1 (SLCO1C1).